Reading from the N-terminus, the 243-residue chain is Probable 2-phosphosulfolactate phosphatase (243 aa).

Belongs to the ComB family. The cofactor is Mg(2+).

It catalyses the reaction (2R)-O-phospho-3-sulfolactate + H2O = (2R)-3-sulfolactate + phosphate. This chain is Probable 2-phosphosulfolactate phosphatase, found in Synechococcus sp. (strain CC9605).